Reading from the N-terminus, the 638-residue chain is Bifunctional protein glk (638 aa).

The interval 1-20 (MSTGVQTKAAPGAGQHADGP) is disordered. The interval 1–341 (MSTGVQTKAA…QLSNRAGGSS (341 aa)) is glucokinase. 24-29 (ADIGGT) is a binding site for ATP. The HTH rpiR-type domain maps to 342–418 (SAVFERIRQM…LKLATGLTGT (77 aa)). The tract at residues 342–638 (SAVFERIRQM…SHGAASSARD (297 aa)) is putative HTH-type transcriptional regulator. Residues 378–397 (IVDIARKADVSQPTVIRFCR) constitute a DNA-binding region (H-T-H motif). Residues 462–601 (AIDLLNGARR…AVGVAIRRAV (140 aa)) form the SIS domain.

The protein in the N-terminal section; belongs to the bacterial glucokinase family.

The protein resides in the cytoplasm. The catalysed reaction is D-glucose + ATP = D-glucose 6-phosphate + ADP + H(+). In Paraburkholderia xenovorans (strain LB400), this protein is Bifunctional protein glk (glk).